A 348-amino-acid polypeptide reads, in one-letter code: Probable dual-specificity RNA methyltransferase RlmN (348 aa).

Residue Glu-93 is the Proton acceptor of the active site. Residues 99–323 (TEKRLTACLS…QTRLSNSGIN (225 aa)) enclose the Radical SAM core domain. An intrachain disulfide couples Cys-106 to Cys-338. Cys-113, Cys-117, and Cys-120 together coordinate [4Fe-4S] cluster. S-adenosyl-L-methionine is bound by residues 160 to 161 (GE), Ser-190, 219 to 221 (SLH), and Asn-295. The active-site S-methylcysteine intermediate is the Cys-338.

This sequence belongs to the radical SAM superfamily. RlmN family. The cofactor is [4Fe-4S] cluster.

The protein localises to the cytoplasm. It carries out the reaction adenosine(2503) in 23S rRNA + 2 reduced [2Fe-2S]-[ferredoxin] + 2 S-adenosyl-L-methionine = 2-methyladenosine(2503) in 23S rRNA + 5'-deoxyadenosine + L-methionine + 2 oxidized [2Fe-2S]-[ferredoxin] + S-adenosyl-L-homocysteine. The catalysed reaction is adenosine(37) in tRNA + 2 reduced [2Fe-2S]-[ferredoxin] + 2 S-adenosyl-L-methionine = 2-methyladenosine(37) in tRNA + 5'-deoxyadenosine + L-methionine + 2 oxidized [2Fe-2S]-[ferredoxin] + S-adenosyl-L-homocysteine. In terms of biological role, specifically methylates position 2 of adenine 2503 in 23S rRNA and position 2 of adenine 37 in tRNAs. This is Probable dual-specificity RNA methyltransferase RlmN from Prochlorococcus marinus subsp. pastoris (strain CCMP1986 / NIES-2087 / MED4).